Here is a 95-residue protein sequence, read N- to C-terminus: Aspartyl/glutamyl-tRNA(Asn/Gln) amidotransferase subunit C (95 aa).

This sequence belongs to the GatC family. In terms of assembly, heterotrimer of A, B and C subunits.

The catalysed reaction is L-glutamyl-tRNA(Gln) + L-glutamine + ATP + H2O = L-glutaminyl-tRNA(Gln) + L-glutamate + ADP + phosphate + H(+). The enzyme catalyses L-aspartyl-tRNA(Asn) + L-glutamine + ATP + H2O = L-asparaginyl-tRNA(Asn) + L-glutamate + ADP + phosphate + 2 H(+). Functionally, allows the formation of correctly charged Asn-tRNA(Asn) or Gln-tRNA(Gln) through the transamidation of misacylated Asp-tRNA(Asn) or Glu-tRNA(Gln) in organisms which lack either or both of asparaginyl-tRNA or glutaminyl-tRNA synthetases. The reaction takes place in the presence of glutamine and ATP through an activated phospho-Asp-tRNA(Asn) or phospho-Glu-tRNA(Gln). This is Aspartyl/glutamyl-tRNA(Asn/Gln) amidotransferase subunit C from Geobacter metallireducens (strain ATCC 53774 / DSM 7210 / GS-15).